Consider the following 177-residue polypeptide: Flavodoxin (177 aa).

The Flavodoxin-like domain maps to 4–173 (IGIFFGSDTG…RIDSWLEKLK (170 aa)).

The protein belongs to the flavodoxin family. FMN serves as cofactor.

Functionally, low-potential electron donor to a number of redox enzymes. NifF is the electron donor to nitrogenase. The sequence is that of Flavodoxin (nifF) from Enterobacter agglomerans (Erwinia herbicola).